We begin with the raw amino-acid sequence, 576 residues long: 5'-nucleotidase (576 aa).

A signal peptide spans 1 to 28 (MRPAAATAPKWLLLALSALLPLWPTAKS). Positions 38 and 40 each coordinate Zn(2+). C53 and C59 form a disulfide bridge. The N-linked (GlcNAc...) asparagine glycan is linked to N55. Zn(2+) contacts are provided by D87, N119, H222, and H245. Residues N313, N335, and N349 are each glycosylated (N-linked (GlcNAc...) asparagine). 2 disulfide bridges follow: C355–C360 and C367–C389. R356 lines the AMP pocket. R356 lines the IMP pocket. N392 and R397 together coordinate AMP. Positions 392 and 397 each coordinate IMP. An N-linked (GlcNAc...) asparagine glycan is attached at N405. Residue F419 coordinates AMP. F419 serves as a coordination point for IMP. A disulfide bridge connects residues C478 and C481. The AMP site is built by Y502 and D508. Y502 and D508 together coordinate IMP. The GPI-anchor amidated serine moiety is linked to residue S551. Residues 552-576 (AASHYQGSFPLIILSFWAVILVLYQ) constitute a propeptide, removed in mature form.

Belongs to the 5'-nucleotidase family. In terms of assembly, homodimer. Requires Zn(2+) as cofactor. In terms of tissue distribution, expressed in the brain.

Its subcellular location is the cell membrane. The enzyme catalyses a ribonucleoside 5'-phosphate + H2O = a ribonucleoside + phosphate. It catalyses the reaction a 2'-deoxyribonucleoside 5'-phosphate + H2O = a 2'-deoxyribonucleoside + phosphate. The catalysed reaction is dTMP + H2O = thymidine + phosphate. It carries out the reaction CMP + H2O = cytidine + phosphate. The enzyme catalyses IMP + H2O = inosine + phosphate. It catalyses the reaction AMP + H2O = adenosine + phosphate. The catalysed reaction is GMP + H2O = guanosine + phosphate. It carries out the reaction UMP + H2O = uridine + phosphate. The enzyme catalyses dAMP + H2O = 2'-deoxyadenosine + phosphate. It catalyses the reaction dCMP + H2O = 2'-deoxycytidine + phosphate. Catalyzes the hydrolysis of nucleotide monophosphates, releasing inorganic phosphate and the corresponding nucleoside. AMP is the preferred substrate but can also hydrolyze CMP and GMP. Shows a preference for ribonucleotide monophosphates over their equivalent deoxyribose forms. Other substrates include IMP, UMP, dAMP, dCMP, dTMP, NAD and NMN. The chain is 5'-nucleotidase (Nt5e) from Rattus norvegicus (Rat).